The chain runs to 706 residues: MADLLIELFSEEIPARMQAKAEADLLAALTGKLKEAGLAWKTAFAVSGPRRLTAVVEGLDARSADVREEKKGPKVGAPEQAIAGFLRGAGLTDISEASVVSDPKKGDFYVAYSTVPGRDAKDVIAEAVPAIIRDFHWPKSMRWGTGELRWVRPLQRIVCVLDGAVVPFEVGGITSGNETEGHRVHGRGPYTVTGWADYKSQLEGQGHVVLSRDDRRAAILGGIEKACAKAGLQWIEDKGLLEEVTGLAEWPVVVLGQMDPDFLDLPPEVITLSMRTHQKYFAATHAKTGKLAPNFILVANIAATDGGAKIAEGNARVLSARLSDARFFWEKDKATPLEVMGEKLKTIAFKEELGSLGDKVERVAALARELAPAVGADPGLAERAARLAKADLVSEMVGEFPELQGVMGRYYALAVGEDARVADAIRDHYKPQGPSDSVPTDPVSIAVALADKLDTLVGFWAIDEKPTGSKDPFALRRAALGVVRINLENGVRLKLSNAILKAPLAVRPVVKGGQSDSVRSAASKAIDALIDPTLLSFFADRLKQVLRDQGKRHDLIDAVFALGEDDLVLIVKRVEALAAFLATEDGATLLAGYRRAANILKAEEKKGALPDGLSVDPALIAKGPAAEQALWASLNETTAALEAPLKTEDFAGAMTALAGLRAPVDAFFEDVLVNDSDAKVRENRLALLIAVRGALHKVADFSRIEG.

Belongs to the class-II aminoacyl-tRNA synthetase family. As to quaternary structure, tetramer of two alpha and two beta subunits.

The protein localises to the cytoplasm. The enzyme catalyses tRNA(Gly) + glycine + ATP = glycyl-tRNA(Gly) + AMP + diphosphate. In Hyphomonas neptunium (strain ATCC 15444), this protein is Glycine--tRNA ligase beta subunit.